We begin with the raw amino-acid sequence, 277 residues long: uncharacterized protein (277 aa).

4 consecutive transmembrane segments (helical) span residues 37-59, 63-82, 214-236, and 246-268; these read YLRYAIIPGLVTGVFSFLLLYIW, LIFGLMGSVYGLKVLMPKVI, MLCGVIVVFVLAITFSFGFKTYI, and WITSGIYMTLMCFFFKSFTTYLF.

It is found in the cell membrane. This is an uncharacterized protein from Bacillus anthracis.